The sequence spans 146 residues: Ribonuclease H (146 aa).

The region spanning 1-138 (MYAWTDGACR…ADALANRGID (138 aa)) is the RNase H type-1 domain. 4 residues coordinate Mg(2+): Asp6, Glu44, Asp66, and Asp130.

Belongs to the RNase H family. Monomer. Mg(2+) serves as cofactor.

It is found in the cytoplasm. The catalysed reaction is Endonucleolytic cleavage to 5'-phosphomonoester.. Endonuclease that specifically degrades the RNA of RNA-DNA hybrids. The sequence is that of Ribonuclease H from Alkalilimnicola ehrlichii (strain ATCC BAA-1101 / DSM 17681 / MLHE-1).